We begin with the raw amino-acid sequence, 130 residues long: Small ribosomal subunit protein uS9 (130 aa).

The protein belongs to the universal ribosomal protein uS9 family.

The protein is Small ribosomal subunit protein uS9 of Desulfovibrio desulfuricans (strain ATCC 27774 / DSM 6949 / MB).